The following is a 217-amino-acid chain: Adenylate kinase (217 aa).

Residue 10 to 15 (GAGKGT) coordinates ATP. The segment at 30–59 (STGDMFRAAMKEGTPLGLQAKQYMDRGDLV) is NMP. AMP contacts are provided by residues T31, R36, 57 to 59 (DLV), 85 to 88 (GFPR), and Q92. Residues 126–163 (GRRICRNCGATYHLIFHPPAKPGVCDKCGGELYQRADD) form an LID region. Residue R127 coordinates ATP. Zn(2+)-binding residues include C130 and C133. 136–137 (TY) contacts ATP. C150 and C153 together coordinate Zn(2+). Residues R160 and R171 each coordinate AMP. Position 199 (Q199) interacts with ATP.

Belongs to the adenylate kinase family. In terms of assembly, monomer.

It is found in the cytoplasm. The enzyme catalyses AMP + ATP = 2 ADP. The protein operates within purine metabolism; AMP biosynthesis via salvage pathway; AMP from ADP: step 1/1. Functionally, catalyzes the reversible transfer of the terminal phosphate group between ATP and AMP. Plays an important role in cellular energy homeostasis and in adenine nucleotide metabolism. The sequence is that of Adenylate kinase from Geobacillus stearothermophilus (Bacillus stearothermophilus).